We begin with the raw amino-acid sequence, 311 residues long: Probable manganese-dependent inorganic pyrophosphatase (311 aa).

Residues His9, Asp13, Asp15, Asp77, His99, and Asp151 each coordinate Mn(2+).

Belongs to the PPase class C family. Mn(2+) is required as a cofactor.

It is found in the cytoplasm. The enzyme catalyses diphosphate + H2O = 2 phosphate + H(+). The chain is Probable manganese-dependent inorganic pyrophosphatase from Streptococcus sanguinis (strain SK36).